A 302-amino-acid chain; its full sequence is MALHDMEDFTFDGTKRLSVNYVKGILQPTDTCDIWDKIWNFQAKPDDLLISTYPKAGTTWTQEIVELIQNEGDVEKSKRAPTHQRFPFLEMKIPSLGSGLEQAHAMPSPRILKTHLPFHLLPPSLLEKNCKIIYVARNPKDNMVSYYHFQRMNKALPAPGTWEEYFETFLAGKVCWGSWHEHVKGWWEAKDKHRILYLFYEDMKKNPKHEIQKLAEFIGKKLDDKVLDKIVHYTSFDVMKQNPMANYSSIPAEIMDHSISPFMRKGAVGDWKKHFTVAQNERFDEDYKKKMTDTRLTFHFQF.

55 to 60 contributes to the 3'-phosphoadenylyl sulfate binding site; it reads KAGTTW. 113-115 is a substrate binding site; it reads KTH. The active-site Proton acceptor is the His-115. 3'-phosphoadenylyl sulfate is bound by residues Arg-137, Ser-145, Tyr-200, 234–239, and 262–266; these read TSFDVM and FMRKG.

This sequence belongs to the sulfotransferase 1 family. As to expression, expressed at high levels in fetal lung and kidney and at low levels in fetal heart, adult kidney, ovary and spinal cord.

It is found in the cytoplasm. It localises to the cytosol. It catalyses the reaction a phenol + 3'-phosphoadenylyl sulfate = an aryl sulfate + adenosine 3',5'-bisphosphate + H(+). The catalysed reaction is 17beta-estradiol + 3'-phosphoadenylyl sulfate = 17beta-estradiol 3-sulfate + adenosine 3',5'-bisphosphate + H(+). It carries out the reaction bisphenol A + 3'-phosphoadenylyl sulfate = bisphenyl A sulfate + adenosine 3',5'-bisphosphate + H(+). Sulfotransferase that utilizes 3'-phospho-5'-adenylyl sulfate (PAPS) as sulfonate donor to catalyze the sulfate conjugation of phenolic compounds. Can also sulfonate estrogenic compounds, however, the dietary flavonoids (phytoestrogen) and environmental estrogens, like bisphenol A are better substrates than 17beta-estradiol (E2). Mediates the sulfation of doxorubicin and its analog epirubicin, two antitumor anthracyclines. The polypeptide is Sulfotransferase 1C4 (Homo sapiens (Human)).